The following is a 556-amino-acid chain: Phosphoenolpyruvate-protein phosphotransferase (556 aa).

Histidine 186 acts as the Tele-phosphohistidine intermediate in catalysis. The phosphoenolpyruvate site is built by arginine 288 and arginine 325. Residues glutamate 415 and aspartate 439 each coordinate Mg(2+). Phosphoenolpyruvate is bound by residues 438-439 (ND) and arginine 449. Residue cysteine 486 is the Proton donor of the active site.

The protein belongs to the PEP-utilizing enzyme family. In terms of assembly, homodimer. Mg(2+) is required as a cofactor.

It is found in the cytoplasm. The catalysed reaction is L-histidyl-[protein] + phosphoenolpyruvate = N(pros)-phospho-L-histidyl-[protein] + pyruvate. In terms of biological role, general (non sugar-specific) component of the phosphoenolpyruvate-dependent sugar phosphotransferase system (sugar PTS). This major carbohydrate active-transport system catalyzes the phosphorylation of incoming sugar substrates concomitantly with their translocation across the cell membrane. Enzyme I transfers the phosphoryl group from phosphoenolpyruvate (PEP) to the phosphoryl carrier protein (HPr). The polypeptide is Phosphoenolpyruvate-protein phosphotransferase (ptsI) (Streptomyces coelicolor (strain ATCC BAA-471 / A3(2) / M145)).